The sequence spans 37 residues: MKVRPSVKPICEKCKIIRREGKVMVICENPKHKQKQG.

It belongs to the bacterial ribosomal protein bL36 family.

In Desulforamulus reducens (strain ATCC BAA-1160 / DSM 100696 / MI-1) (Desulfotomaculum reducens), this protein is Large ribosomal subunit protein bL36.